A 92-amino-acid chain; its full sequence is Integration host factor subunit beta (92 aa).

This sequence belongs to the bacterial histone-like protein family. In terms of assembly, heterodimer of an alpha and a beta chain.

This protein is one of the two subunits of integration host factor, a specific DNA-binding protein that functions in genetic recombination as well as in transcriptional and translational control. The chain is Integration host factor subunit beta from Bartonella tribocorum (strain CIP 105476 / IBS 506).